Consider the following 909-residue polypeptide: Zinc finger and BTB domain-containing protein 41 (909 aa).

The 65-residue stretch at 88–152 (CDLLIIVEGK…LYTSEFFVYK (65 aa)) folds into the BTB domain. The segment at 207–230 (HQCKFCSRHFCYKKSLENHLAKTH) adopts a C2H2-type 1 zinc-finger fold. The disordered stretch occupies residues 252-344 (RSKRNRKCPV…PEAGDSVGNV (93 aa)). The span at 266–275 (TSDDEQESGD) shows a compositional bias: acidic residues. Basic and acidic residues predominate over residues 284-295 (NFDKEKSDRNDS). Residues 296–322 (EDPGSEYNAEEDELEEEMSDEYSDIEE) show a composition bias toward acidic residues. C2H2-type zinc fingers lie at residues 361–383 (LQCPKCDKTFDRIGKYESHTRVH), 389–411 (FECDICHQRYSTKSNLTVHRKKH), 422–445 (HKCPYCNKLHASKKTLAKHVKRFH), 463–485 (WKCDICKKSFTRRPHLEEHMILH), 491–514 (FKCTYCEEHFKSRFARLKHQEKFH), 518–541 (FPCDICGRQFNDTGNLKRHIECTH), 547–569 (WTCFICGKSVRERTTLKEHLRIH), 575–597 (HLCSICGQSFRHGSSYRLHLRVH), 603–625 (YECDECGKTFIRHDHLTKHKKIH), 631–654 (HQCEECGKCFGRRDHLTVHYKSVH), 668–690 (HQCDVCKKIFKGKSSLEMHFRTH), 696–718 (YKCQICNQSFRIKKTLTKHLVIH), and 724–747 (FNCQHCNATFKRKDKLKYHIDHVH).

It is found in the nucleus. Its function is as follows. May be involved in transcriptional regulation. This Homo sapiens (Human) protein is Zinc finger and BTB domain-containing protein 41 (ZBTB41).